Reading from the N-terminus, the 376-residue chain is Glutamate 5-kinase (376 aa).

Position 17 (K17) interacts with ATP. Substrate contacts are provided by S56, D144, and N156. ATP-binding positions include 176-177 (TD) and 218-224 (TGGMQSK). Residues 283 to 359 (KGTLLLDAGA…QSREIASVLK (77 aa)) form the PUA domain.

Belongs to the glutamate 5-kinase family.

The protein localises to the cytoplasm. It catalyses the reaction L-glutamate + ATP = L-glutamyl 5-phosphate + ADP. It participates in amino-acid biosynthesis; L-proline biosynthesis; L-glutamate 5-semialdehyde from L-glutamate: step 1/2. Functionally, catalyzes the transfer of a phosphate group to glutamate to form L-glutamate 5-phosphate. The protein is Glutamate 5-kinase of Desulfotalea psychrophila (strain LSv54 / DSM 12343).